A 200-amino-acid polypeptide reads, in one-letter code: MTSKIFSPKISAVIESLRKLPTIGKKSSQRLALYLLDKSPETAIAIANSLLDATANIKKCVYCQALTEDDVCNICSNTNRDNTKLCIIESMLDMIAIEEAGIYRGKYFVLNGRISPLDGIGPSELKLDILQQIIADRKIDEVILAISPTVEGETTAHFISQMIAKDIKISRIGFGVPFGGELEYLDQQTLLHAFNARTNI.

A C4-type zinc finger spans residues 60–75; that stretch reads CVYCQALTEDDVCNIC. The region spanning 83–177 is the Toprim domain; sequence TKLCIIESML…KISRIGFGVP (95 aa).

This sequence belongs to the RecR family.

Its function is as follows. May play a role in DNA repair. It seems to be involved in an RecBC-independent recombinational process of DNA repair. It may act with RecF and RecO. This chain is Recombination protein RecR, found in Francisella tularensis subsp. tularensis (strain SCHU S4 / Schu 4).